A 218-amino-acid polypeptide reads, in one-letter code: DNA endonuclease I-CeuI (218 aa).

Mg(2+) is bound by residues G65 and E66. The interaction with DNA stretch occupies residues 71–75 (ISTKK). Mg(2+) is bound at residue D86. Interaction with DNA stretches follow at residues 90–94 (NVTQH), 114–116 (RHK), and 191–199 (KQQGQSNEG).

The protein belongs to the LAGLIDADG endonuclease family. As to quaternary structure, homodimer. The cofactor is Mg(2+).

Its subcellular location is the plastid. It localises to the chloroplast. Its function is as follows. Endonuclease involved in intron homing. Recognizes a degenerate sequence of 17-19 bp to produce a staggered cut 5 bp downstream from the CeLSU.5 intron insertion site. This Chlamydomonas moewusii (Chlamydomonas eugametos) protein is DNA endonuclease I-CeuI.